The chain runs to 318 residues: HPr kinase/phosphorylase (318 aa).

Catalysis depends on residues His143 and Lys164. An ATP-binding site is contributed by 158-165 (GKSGVGKS). Ser165 is a Mg(2+) binding site. Residue Asp182 is the Proton acceptor; for phosphorylation activity. Proton donor; for dephosphorylation activity of the active site. The interval 206–215 (MEIRGLGILN) is important for the catalytic mechanism of both phosphorylation and dephosphorylation. Glu207 contributes to the Mg(2+) binding site. Residue Arg248 is part of the active site. Residues 269–274 (PVKPGR) are important for the catalytic mechanism of dephosphorylation.

This sequence belongs to the HPrK/P family. As to quaternary structure, homohexamer. Requires Mg(2+) as cofactor.

The catalysed reaction is [HPr protein]-L-serine + ATP = [HPr protein]-O-phospho-L-serine + ADP + H(+). It carries out the reaction [HPr protein]-O-phospho-L-serine + phosphate + H(+) = [HPr protein]-L-serine + diphosphate. Its function is as follows. Catalyzes the ATP- as well as the pyrophosphate-dependent phosphorylation of a specific serine residue in HPr, a phosphocarrier protein of the phosphoenolpyruvate-dependent sugar phosphotransferase system (PTS). HprK/P also catalyzes the pyrophosphate-producing, inorganic phosphate-dependent dephosphorylation (phosphorolysis) of seryl-phosphorylated HPr (P-Ser-HPr). The protein is HPr kinase/phosphorylase of Leptospira borgpetersenii serovar Hardjo-bovis (strain JB197).